Consider the following 562-residue polypeptide: Formate--tetrahydrofolate ligase (562 aa).

71-78 (TPAGEGKS) lines the ATP pocket.

It belongs to the formate--tetrahydrofolate ligase family.

It catalyses the reaction (6S)-5,6,7,8-tetrahydrofolate + formate + ATP = (6R)-10-formyltetrahydrofolate + ADP + phosphate. The protein operates within one-carbon metabolism; tetrahydrofolate interconversion. This Bacillus cereus (strain Q1) protein is Formate--tetrahydrofolate ligase.